We begin with the raw amino-acid sequence, 433 residues long: Gamma-glutamyl phosphate reductase 1 (433 aa).

The protein belongs to the gamma-glutamyl phosphate reductase family.

It localises to the cytoplasm. It carries out the reaction L-glutamate 5-semialdehyde + phosphate + NADP(+) = L-glutamyl 5-phosphate + NADPH + H(+). Its pathway is amino-acid biosynthesis; L-proline biosynthesis; L-glutamate 5-semialdehyde from L-glutamate: step 2/2. Catalyzes the NADPH-dependent reduction of L-glutamate 5-phosphate into L-glutamate 5-semialdehyde and phosphate. The product spontaneously undergoes cyclization to form 1-pyrroline-5-carboxylate. This Synechocystis sp. (strain ATCC 27184 / PCC 6803 / Kazusa) protein is Gamma-glutamyl phosphate reductase 1.